Reading from the N-terminus, the 81-residue chain is Small ribosomal subunit protein bS16 (81 aa).

The protein belongs to the bacterial ribosomal protein bS16 family.

The sequence is that of Small ribosomal subunit protein bS16 from Neisseria gonorrhoeae (strain ATCC 700825 / FA 1090).